Reading from the N-terminus, the 415-residue chain is D-galactonate dehydratase family member RspA (415 aa).

Residues Asn-48 and His-133 each contribute to the substrate site. Tyr-170 acts as the Proton donor/acceptor in catalysis. Residue Asp-223 coordinates Mg(2+). Residue His-225 is the Proton donor/acceptor of the active site. Mg(2+)-binding residues include Glu-249, Asp-250, and Glu-275. 5 residues coordinate substrate: Glu-275, Arg-296, His-325, Asp-329, and Glu-352.

Belongs to the mandelate racemase/muconate lactonizing enzyme family. GalD subfamily. The cofactor is Mg(2+).

It catalyses the reaction D-mannonate = 2-dehydro-3-deoxy-D-gluconate + H2O. Functionally, has low D-mannonate dehydratase activity (in vitro), suggesting that this is not a physiological substrate and that it has no significant role in D-mannonate degradation in vivo. Has no detectable activity with a panel of 70 other acid sugars (in vitro). The protein is D-galactonate dehydratase family member RspA (rspA) of Escherichia coli O6:H1 (strain CFT073 / ATCC 700928 / UPEC).